A 911-amino-acid chain; its full sequence is DNA mismatch repair protein MutS (911 aa).

An ATP-binding site is contributed by 660–667 (GPNMAGKS).

The protein belongs to the DNA mismatch repair MutS family.

Functionally, this protein is involved in the repair of mismatches in DNA. It is possible that it carries out the mismatch recognition step. This protein has a weak ATPase activity. The chain is DNA mismatch repair protein MutS from Rhodopseudomonas palustris (strain HaA2).